A 488-amino-acid polypeptide reads, in one-letter code: Protein nucleotidyltransferase YdiU (488 aa).

ATP contacts are provided by Gly-91, Gly-93, Arg-94, Lys-114, Asp-126, Gly-127, Arg-177, and Arg-184. Residue Asp-253 is the Proton acceptor of the active site. The Mg(2+) site is built by Asn-254 and Asp-263. Asp-263 contacts ATP.

The protein belongs to the SELO family. The cofactor is Mg(2+). Mn(2+) is required as a cofactor.

The catalysed reaction is L-seryl-[protein] + ATP = 3-O-(5'-adenylyl)-L-seryl-[protein] + diphosphate. The enzyme catalyses L-threonyl-[protein] + ATP = 3-O-(5'-adenylyl)-L-threonyl-[protein] + diphosphate. It carries out the reaction L-tyrosyl-[protein] + ATP = O-(5'-adenylyl)-L-tyrosyl-[protein] + diphosphate. It catalyses the reaction L-histidyl-[protein] + UTP = N(tele)-(5'-uridylyl)-L-histidyl-[protein] + diphosphate. The catalysed reaction is L-seryl-[protein] + UTP = O-(5'-uridylyl)-L-seryl-[protein] + diphosphate. The enzyme catalyses L-tyrosyl-[protein] + UTP = O-(5'-uridylyl)-L-tyrosyl-[protein] + diphosphate. Its function is as follows. Nucleotidyltransferase involved in the post-translational modification of proteins. It can catalyze the addition of adenosine monophosphate (AMP) or uridine monophosphate (UMP) to a protein, resulting in modifications known as AMPylation and UMPylation. In Bacillus thuringiensis subsp. konkukian (strain 97-27), this protein is Protein nucleotidyltransferase YdiU.